Consider the following 463-residue polypeptide: Ribosomal protein uS12 methylthiotransferase RimO (463 aa).

Residues 11–126 (PKIGFVSLGC…VMEVVHTHCP (116 aa)) enclose the MTTase N-terminal domain. Positions 20, 56, 85, 161, 165, and 168 each coordinate [4Fe-4S] cluster. Residues 147–388 (LTPRHYAYLK…MAVAEEVSTA (242 aa)) form the Radical SAM core domain. The TRAM domain occupies 391–463 (QRRVGQTMQV…QGHDLVGVPV (73 aa)).

It belongs to the methylthiotransferase family. RimO subfamily. [4Fe-4S] cluster is required as a cofactor.

It is found in the cytoplasm. The enzyme catalyses L-aspartate(89)-[ribosomal protein uS12]-hydrogen + (sulfur carrier)-SH + AH2 + 2 S-adenosyl-L-methionine = 3-methylsulfanyl-L-aspartate(89)-[ribosomal protein uS12]-hydrogen + (sulfur carrier)-H + 5'-deoxyadenosine + L-methionine + A + S-adenosyl-L-homocysteine + 2 H(+). In terms of biological role, catalyzes the methylthiolation of an aspartic acid residue of ribosomal protein uS12. The chain is Ribosomal protein uS12 methylthiotransferase RimO from Acidovorax sp. (strain JS42).